The sequence spans 317 residues: Homoserine O-succinyltransferase (317 aa).

Cys142 serves as the catalytic Acyl-thioester intermediate. Residues Lys163 and Ser192 each coordinate substrate. His235 functions as the Proton acceptor in the catalytic mechanism. The active site involves Glu237. Arg249 serves as a coordination point for substrate.

It belongs to the MetA family.

The protein resides in the cytoplasm. The catalysed reaction is L-homoserine + succinyl-CoA = O-succinyl-L-homoserine + CoA. It functions in the pathway amino-acid biosynthesis; L-methionine biosynthesis via de novo pathway; O-succinyl-L-homoserine from L-homoserine: step 1/1. Transfers a succinyl group from succinyl-CoA to L-homoserine, forming succinyl-L-homoserine. The sequence is that of Homoserine O-succinyltransferase from Aeromonas hydrophila subsp. hydrophila (strain ATCC 7966 / DSM 30187 / BCRC 13018 / CCUG 14551 / JCM 1027 / KCTC 2358 / NCIMB 9240 / NCTC 8049).